We begin with the raw amino-acid sequence, 631 residues long: Phosphomethylpyrimidine synthase (631 aa).

Residues Asn239, Met268, Tyr297, His333, 353 to 355 (SRG), 394 to 397 (DGLR), and Glu433 each bind substrate. His437 lines the Zn(2+) pocket. Tyr460 lines the substrate pocket. His501 contacts Zn(2+). 3 residues coordinate [4Fe-4S] cluster: Cys581, Cys584, and Cys589.

The protein belongs to the ThiC family. Homodimer. [4Fe-4S] cluster serves as cofactor.

It carries out the reaction 5-amino-1-(5-phospho-beta-D-ribosyl)imidazole + S-adenosyl-L-methionine = 4-amino-2-methyl-5-(phosphooxymethyl)pyrimidine + CO + 5'-deoxyadenosine + formate + L-methionine + 3 H(+). The protein operates within cofactor biosynthesis; thiamine diphosphate biosynthesis. Functionally, catalyzes the synthesis of the hydroxymethylpyrimidine phosphate (HMP-P) moiety of thiamine from aminoimidazole ribotide (AIR) in a radical S-adenosyl-L-methionine (SAM)-dependent reaction. This is Phosphomethylpyrimidine synthase from Escherichia coli O8 (strain IAI1).